We begin with the raw amino-acid sequence, 84 residues long: Sec-independent protein translocase protein TatA (84 aa).

A helical membrane pass occupies residues 1 to 21 (MPNLGVPELLIIALVIFLLFG). Residues 42 to 57 (EMDEMKTDGDKKELAE) show a composition bias toward basic and acidic residues. The segment at 42-84 (EMDEMKTDGDKKELAEKQAPTAEQQQAQDLAQPKSEQPNEHNA) is disordered. Positions 62-77 (TAEQQQAQDLAQPKSE) are enriched in polar residues.

The protein belongs to the TatA/E family. In terms of assembly, the Tat system comprises two distinct complexes: a TatABC complex, containing multiple copies of TatA, TatB and TatC subunits, and a separate TatA complex, containing only TatA subunits. Substrates initially bind to the TatABC complex, which probably triggers association of the separate TatA complex to form the active translocon.

The protein resides in the cell membrane. In terms of biological role, part of the twin-arginine translocation (Tat) system that transports large folded proteins containing a characteristic twin-arginine motif in their signal peptide across membranes. TatA could form the protein-conducting channel of the Tat system. The chain is Sec-independent protein translocase protein TatA from Corynebacterium jeikeium (strain K411).